A 120-amino-acid chain; its full sequence is HTH-type transcriptional regulator MerD (120 aa).

The HTH merR-type domain occupies 3 to 72 (AYTVSQLAHN…LDALARLCRA (70 aa)). The H-T-H motif DNA-binding region spans 6-25 (VSQLAHNAGVSVHIVRDYLV).

The protein is HTH-type transcriptional regulator MerD (merD) of Shigella flexneri.